The chain runs to 698 residues: Elongation factor G (698 aa).

One can recognise a tr-type G domain in the interval 8-290; that stretch reads ERYRNIGISA…AVIEFLPSPV (283 aa). Residues 17-24, 88-92, and 142-145 contribute to the GTP site; these read AHIDAGKT, DTPGH, and NKMD.

This sequence belongs to the TRAFAC class translation factor GTPase superfamily. Classic translation factor GTPase family. EF-G/EF-2 subfamily.

The protein localises to the cytoplasm. Its function is as follows. Catalyzes the GTP-dependent ribosomal translocation step during translation elongation. During this step, the ribosome changes from the pre-translocational (PRE) to the post-translocational (POST) state as the newly formed A-site-bound peptidyl-tRNA and P-site-bound deacylated tRNA move to the P and E sites, respectively. Catalyzes the coordinated movement of the two tRNA molecules, the mRNA and conformational changes in the ribosome. In Azoarcus sp. (strain BH72), this protein is Elongation factor G.